Consider the following 160-residue polypeptide: Ureidoglycolate lyase (160 aa).

The protein belongs to the ureidoglycolate lyase family. As to quaternary structure, homodimer. The cofactor is Ni(2+).

It carries out the reaction (S)-ureidoglycolate = urea + glyoxylate. Its pathway is nitrogen metabolism; (S)-allantoin degradation. In terms of biological role, catalyzes the catabolism of the allantoin degradation intermediate (S)-ureidoglycolate, generating urea and glyoxylate. Involved in the utilization of allantoin as nitrogen source. This chain is Ureidoglycolate lyase, found in Salmonella agona (strain SL483).